The following is a 149-amino-acid chain: Arginine repressor (149 aa).

The protein belongs to the ArgR family.

It is found in the cytoplasm. It functions in the pathway amino-acid biosynthesis; L-arginine biosynthesis [regulation]. Its function is as follows. Regulates arginine biosynthesis genes. The sequence is that of Arginine repressor from Geobacillus thermodenitrificans (strain NG80-2).